The sequence spans 154 residues: 3-hydroxyacyl-[acyl-carrier-protein] dehydratase FabZ (154 aa).

The active site involves H60.

This sequence belongs to the thioester dehydratase family. FabZ subfamily.

The protein resides in the cytoplasm. It carries out the reaction a (3R)-hydroxyacyl-[ACP] = a (2E)-enoyl-[ACP] + H2O. In terms of biological role, involved in unsaturated fatty acids biosynthesis. Catalyzes the dehydration of short chain beta-hydroxyacyl-ACPs and long chain saturated and unsaturated beta-hydroxyacyl-ACPs. The sequence is that of 3-hydroxyacyl-[acyl-carrier-protein] dehydratase FabZ from Haemophilus ducreyi (strain 35000HP / ATCC 700724).